The sequence spans 794 residues: MIITRNWLKKYLNLDNISNDQINMALNSLGFEVDSVYDLNSLNSELILGYVEQSKQIPDTHLKLNQVNIGTKSLQIVCGASNVDANQFVVIAPINATIANGLTLTSKKIQNYESQGMICALNEIGIDLSVINKEDQLKIYNVSDKNLDLKKYIGSDVKQIIGLDDYLFEIDLTLNRSDCLASFQILKELANYFDLKIKNLDNNFSDFKKNNLDLKIDLANQVKDQIKTISYSYFELNNKNDKLDSKDEIFLKLNQINSSNHSITNLSLISTLSTAQTHILIDLDKLKSSNLKLEFINHDNKELLCLTNNNKLVNIIGLDTQNEFNVDNNSKNVLNIMLNIEPNLMRKQQKLLNISNTYLQRYIKPINPNLFNLANQTFSNLLNDYQLINKAYEVKILKQTFKNKQSLEIKLNEINDLLGTNLTIKQIKSLFKHLDFKITNKDDLLDFQIDQNRIDITSKNDLCEEVARLYSYDKIDEIPLSFTSFKKAKNLNLKLENKLTNYLIGLGFNNTKTYSLTSLNEAKYWNLFNISEFINLVSPLSNLRQTYRTNLSKSLIDVAIFNHSINNKELKLFEIADIYDLNNLKQRHLVFLTSNHIYKNSLNQQLIENNFYYNKEILENIFNLYNLDLSEIQYQSDLNLIKEIHPYINTTIYYQNQLIGYLYKLNPKFESENKLNPTFVCEINLDILNQFKNSFIEAKTLSKFQSSSRDLTIEISNDLTYQKVLFNALSDVKYLKSHKIVDLYLDDNLIKNNTKALTIQFVFNDLEHQLTENEINQEFEKIIKNIKQMKVVIR.

In terms of domain architecture, tRNA-binding spans 40–158; sequence NSLNSELILG…LKKYIGSDVK (119 aa). The region spanning 402-477 is the B5 domain; sequence KNKQSLEIKL…RLYSYDKIDE (76 aa). Mg(2+)-binding residues include Asp455, Asp461, Glu464, and Glu465. Residues 702 to 794 form the FDX-ACB domain; sequence SKFQSSSRDL…NIKQMKVVIR (93 aa).

It belongs to the phenylalanyl-tRNA synthetase beta subunit family. Type 1 subfamily. As to quaternary structure, tetramer of two alpha and two beta subunits. Requires Mg(2+) as cofactor.

It is found in the cytoplasm. The catalysed reaction is tRNA(Phe) + L-phenylalanine + ATP = L-phenylalanyl-tRNA(Phe) + AMP + diphosphate + H(+). This is Phenylalanine--tRNA ligase beta subunit from Mycoplasma mycoides subsp. mycoides SC (strain CCUG 32753 / NCTC 10114 / PG1).